The sequence spans 385 residues: S-adenosylmethionine synthase (385 aa).

ATP is bound at residue histidine 15. Aspartate 17 lines the Mg(2+) pocket. Glutamate 43 contributes to the K(+) binding site. The L-methionine site is built by glutamate 56 and glutamine 99. The interval 99–109 (QSPDINKGINN) is flexible loop. ATP is bound by residues 164 to 166 (DAK), 230 to 231 (RF), aspartate 239, 245 to 246 (RK), alanine 262, and lysine 266. Aspartate 239 contacts L-methionine. An L-methionine-binding site is contributed by lysine 270.

It belongs to the AdoMet synthase family. Homotetramer; dimer of dimers. The cofactor is Mg(2+). K(+) serves as cofactor.

It localises to the cytoplasm. The catalysed reaction is L-methionine + ATP + H2O = S-adenosyl-L-methionine + phosphate + diphosphate. Its pathway is amino-acid biosynthesis; S-adenosyl-L-methionine biosynthesis; S-adenosyl-L-methionine from L-methionine: step 1/1. Catalyzes the formation of S-adenosylmethionine (AdoMet) from methionine and ATP. The overall synthetic reaction is composed of two sequential steps, AdoMet formation and the subsequent tripolyphosphate hydrolysis which occurs prior to release of AdoMet from the enzyme. This Baumannia cicadellinicola subsp. Homalodisca coagulata protein is S-adenosylmethionine synthase.